The sequence spans 641 residues: Bifunctional protein glk (641 aa).

The segment at 1–340 (MSTGAQTKAA…QLSNRTGGAS (340 aa)) is glucokinase. 23–28 (ADVGGT) provides a ligand contact to ATP. An HTH rpiR-type domain is found at 341–417 (SAVFERIRQM…LKLATGLTGT (77 aa)). The tract at residues 341–641 (SAVFERIRQM…SHGAAPAAKD (301 aa)) is putative HTH-type transcriptional regulator. The segment at residues 377-396 (IVNIARKADVSQPTVIRFCR) is a DNA-binding region (H-T-H motif). The 140-residue stretch at 461-600 (AIDILNNARR…AVGVAIRRAA (140 aa)) folds into the SIS domain. Residues 576 to 596 (SMISRILHLVMIDILAVGVAI) form a helical membrane-spanning segment.

This sequence in the N-terminal section; belongs to the bacterial glucokinase family.

Its subcellular location is the membrane. The enzyme catalyses D-glucose + ATP = D-glucose 6-phosphate + ADP + H(+). In Burkholderia mallei (strain ATCC 23344), this protein is Bifunctional protein glk (glk).